The sequence spans 321 residues: Carbonic anhydrase, chloroplastic (321 aa).

The N-terminal 100 residues, 1–100, are a transit peptide targeting the chloroplast; the sequence is MSTASINSCL…AAARVDQITA (100 aa).

The protein belongs to the beta-class carbonic anhydrase family. As to quaternary structure, homohexamer.

The protein resides in the plastid. Its subcellular location is the chloroplast stroma. The catalysed reaction is hydrogencarbonate + H(+) = CO2 + H2O. Its function is as follows. Reversible hydration of carbon dioxide. The polypeptide is Carbonic anhydrase, chloroplastic (Nicotiana tabacum (Common tobacco)).